We begin with the raw amino-acid sequence, 501 residues long: tRNA (guanine(37)-N(1))-methyltransferase (501 aa).

Residues His282, Asp320–Leu321, Asp348–Gly349, and Asn380 each bind S-adenosyl-L-methionine. Residues Leu474 to Ser501 form a disordered region.

It belongs to the class I-like SAM-binding methyltransferase superfamily. TRM5/TYW2 family. As to quaternary structure, monomer.

It localises to the mitochondrion matrix. It is found in the nucleus. Its subcellular location is the cytoplasm. The catalysed reaction is guanosine(37) in tRNA + S-adenosyl-L-methionine = N(1)-methylguanosine(37) in tRNA + S-adenosyl-L-homocysteine + H(+). Its function is as follows. Involved in mitochondrial tRNA methylation. Specifically methylates the N1 position of guanosine-37 in various tRNAs. Methylation is not dependent on the nature of the nucleoside 5' of the target nucleoside. This is the first step in the biosynthesis of wybutosine (yW), a modified base adjacent to the anticodon of tRNAs and required for accurate decoding. The sequence is that of tRNA (guanine(37)-N(1))-methyltransferase (Trmt5) from Mus musculus (Mouse).